The sequence spans 351 residues: Phosphate acyltransferase (351 aa).

It belongs to the PlsX family. As to quaternary structure, homodimer. Probably interacts with PlsY.

Its subcellular location is the cytoplasm. The catalysed reaction is a fatty acyl-[ACP] + phosphate = an acyl phosphate + holo-[ACP]. It participates in lipid metabolism; phospholipid metabolism. In terms of biological role, catalyzes the reversible formation of acyl-phosphate (acyl-PO(4)) from acyl-[acyl-carrier-protein] (acyl-ACP). This enzyme utilizes acyl-ACP as fatty acyl donor, but not acyl-CoA. This chain is Phosphate acyltransferase, found in Gloeothece citriformis (strain PCC 7424) (Cyanothece sp. (strain PCC 7424)).